Reading from the N-terminus, the 325-residue chain is Neisseria adhesin A (325 aa).

Residues 1-23 (MKHFQSKVLTAAILAALSGSAMA) form the signal peptide. Residues 24-137 (DNPPPSTDEI…NTAAIGENKA (114 aa)) form a head domain region. Positions 86-135 (LKEVLAQHDQSLADLTGTVDENSEALVKTAEVVNDISADVKANTAAIGEN) form a coiled coil. A coiled stalk domain region spans residues 139–231 (IAKKADQTAL…LASAEKSITE (93 aa)). The segment at 232–270 (HGTRLNGLDRTVSDLRKETRQGLAEQAALSGLFQPYNVG) is outer membrane translocation of the passenger domain. The next 4 membrane-spanning stretches (beta stranded) occupy residues 270 to 280 (GRFNVTAAVGG), 284 to 295 (ESAVAIGTGFRF), 302 to 308 (KAGVAVG), and 314 to 325 (SAAYHVGVNYEW). A translocator domain region spans residues 271-325 (RFNVTAAVGGYKSESAVAIGTGFRFTENFAAKAGVAVGTSSGSSAAYHVGVNYEW).

Belongs to the autotransporter-2 (AT-2) (TC 1.B.40) family. Homotrimer.

The protein localises to the cell surface. Its subcellular location is the cell outer membrane. In terms of biological role, an antigenic bacterial cell surface protein that adheres to and induces bacterial uptake by human epithelial cells. The sequence is that of Neisseria adhesin A from Neisseria meningitidis serogroup B.